A 124-amino-acid polypeptide reads, in one-letter code: Large ribosomal subunit protein eL22z (124 aa).

This sequence belongs to the eukaryotic ribosomal protein eL22 family.

This is Large ribosomal subunit protein eL22z (RPL22B) from Arabidopsis thaliana (Mouse-ear cress).